Reading from the N-terminus, the 996-residue chain is P3N-PIPO polyprotein (996 aa).

The region spanning 173–313 (VVRSASVNNL…VFFYDDVDHY (141 aa)) is the Peptidase S30 domain. Catalysis depends on for P1 proteinase activity residues His226, Glu235, and Ser267. Residues 365–368 (KLSC) carry the Involved in interaction with stylet and aphid transmission motif. The Involved in virions binding and aphid transmission motif lies at 621 to 623 (PTK). The 123-residue stretch at 647-769 (MYIAKEGYCY…QSEMKHYRVG (123 aa)) folds into the Peptidase C6 domain. Active-site for helper component proteinase activity residues include Cys655 and His728.

Belongs to the potyviridae P3N-PIPO polyprotein family. Interacts (via PIPO domain) with host PCaP1 protein; this interaction may help to anchor the movement complex to the plasma membrane from which the complex could move to the plasmodesmata. Post-translationally, potyviral RNA is expressed as two polyproteins which undergo post-translational proteolytic processing. Genome polyprotein is processed by NIa-pro, P1 and HC-pro proteinases resulting in the production of at least ten individual proteins. P3N-PIPO is cleaved by P1 and HC-pro proteinases resulting in the production of three individual proteins. The P1 proteinase and the HC-pro cleave only their respective C-termini autocatalytically.

It is found in the host cell junction. Its subcellular location is the host plasmodesma. The catalysed reaction is Hydrolyzes a Gly-|-Gly bond at its own C-terminus, commonly in the sequence -Tyr-Xaa-Val-Gly-|-Gly, in the processing of the potyviral polyprotein.. Functionally, required for aphid transmission and also has proteolytic activity. Only cleaves a Gly-Gly dipeptide at its own C-terminus. Interacts with virions and aphid stylets. Acts as a suppressor of RNA-mediated gene silencing, also known as post-transcriptional gene silencing (PTGS), a mechanism of plant viral defense that limits the accumulation of viral RNAs. May have RNA-binding activity. Allows efficient cell to cell propagation, by bypassing the host cell wall barrier. Transports viral genome to neighboring plant cells directly through plasmosdesmata, without any budding. This Zucchini yellow mosaic virus (strain Reunion Island) (ZYMV) protein is P3N-PIPO polyprotein.